The sequence spans 371 residues: Vasopressin V2 receptor (371 aa).

Residues Met-1–Arg-38 are Extracellular-facing. Asn-22 is a glycosylation site (N-linked (GlcNAc...) asparagine). Residues Ala-39–Ile-63 traverse the membrane as a helical segment. At Arg-64 to Phe-77 the chain is on the cytoplasmic side. Residues Ile-78 to Ala-98 traverse the membrane as a helical segment. Topologically, residues Trp-99–Arg-113 are extracellular. The chain crosses the membrane as a helical span at residues Ala-114 to Leu-135. Topologically, residues Asp-136–Pro-159 are cytoplasmic. Residues Val-160 to Gln-180 traverse the membrane as a helical segment. Residues Arg-181 to Trp-200 are Extracellular-facing. An N-linked (GlcNAc...) asparagine glycan is attached at Asn-185. A helical membrane pass occupies residues Gly-201–Gly-220. The Cytoplasmic segment spans residues Ile-221–Arg-271. The interval Pro-240–Ala-260 is disordered. Residues Met-272–Trp-293 traverse the membrane as a helical segment. The Extracellular portion of the chain corresponds to Ala-294–Val-308. Residues Leu-309–Phe-328 form a helical membrane-spanning segment. The Cytoplasmic portion of the chain corresponds to Ser-329–Ser-371. 2 S-palmitoyl cysteine lipidation sites follow: Cys-341 and Cys-342. Residues His-349–Ser-371 form a disordered region. Residues Ser-357–Ser-371 are compositionally biased toward polar residues.

It belongs to the G-protein coupled receptor 1 family. Vasopressin/oxytocin receptor subfamily. As to quaternary structure, interacts with ARRDC4. Identified in a complex containing at least ARRDC4, V2R and HGS. Interacts with TMEM147. Kidney.

The protein resides in the cell membrane. Its function is as follows. Receptor for arginine vasopressin. The activity of this receptor is mediated by G proteins which activate adenylate cyclase. Involved in renal water reabsorption. The polypeptide is Vasopressin V2 receptor (Avpr2) (Rattus norvegicus (Rat)).